The chain runs to 225 residues: GTP cyclohydrolase III (225 aa).

This sequence belongs to the archaeal-type GTP cyclohydrolase family.

It catalyses the reaction GTP + 3 H2O = 2-amino-5-formylamino-6-(5-phospho-D-ribosylamino)pyrimidin-4(3H)-one + 2 phosphate + 2 H(+). Functionally, catalyzes the formation of 2-amino-5-formylamino-6-ribofuranosylamino-4(3H)-pyrimidinone ribonucleotide monophosphate and inorganic phosphate from GTP. Also has an independent pyrophosphate phosphohydrolase activity. The polypeptide is GTP cyclohydrolase III (Sulfurisphaera tokodaii (strain DSM 16993 / JCM 10545 / NBRC 100140 / 7) (Sulfolobus tokodaii)).